The primary structure comprises 173 residues: 6,7-dimethyl-8-ribityllumazine synthase (173 aa).

Residues Y34, 65 to 67, and 94 to 96 each bind 5-amino-6-(D-ribitylamino)uracil; these read ALE and CVI. 99-100 serves as a coordination point for (2S)-2-hydroxy-3-oxobutyl phosphate; sequence ET. H102 functions as the Proton donor in the catalytic mechanism. N127 contributes to the 5-amino-6-(D-ribitylamino)uracil binding site. R141 lines the (2S)-2-hydroxy-3-oxobutyl phosphate pocket.

Belongs to the DMRL synthase family.

It catalyses the reaction (2S)-2-hydroxy-3-oxobutyl phosphate + 5-amino-6-(D-ribitylamino)uracil = 6,7-dimethyl-8-(1-D-ribityl)lumazine + phosphate + 2 H2O + H(+). It functions in the pathway cofactor biosynthesis; riboflavin biosynthesis; riboflavin from 2-hydroxy-3-oxobutyl phosphate and 5-amino-6-(D-ribitylamino)uracil: step 1/2. In terms of biological role, catalyzes the formation of 6,7-dimethyl-8-ribityllumazine by condensation of 5-amino-6-(D-ribitylamino)uracil with 3,4-dihydroxy-2-butanone 4-phosphate. This is the penultimate step in the biosynthesis of riboflavin. The protein is 6,7-dimethyl-8-ribityllumazine synthase of Methylorubrum extorquens (strain CM4 / NCIMB 13688) (Methylobacterium extorquens).